The following is a 728-amino-acid chain: Catalase B (728 aa).

The N-terminal stretch at 1 to 15 (MRLTFIPSLIGVANA) is a signal peptide. A propeptide spanning residues 16 to 27 (VCPYMTGELNRR) is cleaved from the precursor. Histidine 102 is an active-site residue. Residue asparagine 120 is glycosylated (N-linked (GlcNAc...) asparagine). Residue asparagine 175 is part of the active site. Heme is bound at residue tyrosine 389. N-linked (GlcNAc...) asparagine glycans are attached at residues asparagine 448 and asparagine 551.

Belongs to the catalase family. As to quaternary structure, homotetramer. Requires heme as cofactor. N-glycosylated.

Its subcellular location is the secreted. It carries out the reaction 2 H2O2 = O2 + 2 H2O. Functionally, occurs in almost all aerobically respiring organisms and serves to protect cells from the toxic effects of hydrogen peroxide. The chain is Catalase B (catB) from Aspergillus fumigatus (strain ATCC MYA-4609 / CBS 101355 / FGSC A1100 / Af293) (Neosartorya fumigata).